The chain runs to 240 residues: Small ribosomal subunit protein uS2c (240 aa).

It belongs to the universal ribosomal protein uS2 family.

The protein localises to the plastid. Its subcellular location is the chloroplast. This Cycas taitungensis (Prince sago) protein is Small ribosomal subunit protein uS2c (rps2).